A 529-amino-acid polypeptide reads, in one-letter code: UDP-glucuronosyltransferase 2B18 (529 aa).

A signal peptide spans 1–21 (MSVKWTSVILLIQLSFYFSSG). N-linked (GlcNAc...) asparagine glycosylation is found at Asn-67 and Asn-68. The chain crosses the membrane as a helical span at residues 493–513 (VIGFLLACVATVIFIIMKCCL).

It belongs to the UDP-glycosyltransferase family. As to expression, expressed in liver, prostate, kidney, testis, adrenal, bile duct, bladder, colon, small intestine, cerebellum and pancreas.

The protein localises to the microsome membrane. Its subcellular location is the endoplasmic reticulum membrane. It catalyses the reaction glucuronate acceptor + UDP-alpha-D-glucuronate = acceptor beta-D-glucuronoside + UDP + H(+). In terms of biological role, UDPGT is of major importance in the conjugation and subsequent elimination of potentially toxic xenobiotics and endogenous compounds. This isozyme displays activity toward 3-hydroxyandrogens. It is principally active on C19 steroids having a hydroxyl group at position 3-alpha of the steroid molecule and also active on planar phenols and bile acids. The sequence is that of UDP-glucuronosyltransferase 2B18 (UGT2B18) from Macaca fascicularis (Crab-eating macaque).